The chain runs to 691 residues: DNA-directed RNA polymerase subunit beta' (691 aa).

C69, C71, C87, and C90 together coordinate Zn(2+). Mg(2+)-binding residues include D489, D491, and D493.

It belongs to the RNA polymerase beta' chain family. RpoC1 subfamily. As to quaternary structure, in plastids the minimal PEP RNA polymerase catalytic core is composed of four subunits: alpha, beta, beta', and beta''. When a (nuclear-encoded) sigma factor is associated with the core the holoenzyme is formed, which can initiate transcription. Requires Mg(2+) as cofactor. The cofactor is Zn(2+).

The protein resides in the plastid. It localises to the chloroplast. The catalysed reaction is RNA(n) + a ribonucleoside 5'-triphosphate = RNA(n+1) + diphosphate. In terms of biological role, DNA-dependent RNA polymerase catalyzes the transcription of DNA into RNA using the four ribonucleoside triphosphates as substrates. In Jasminum nudiflorum (Winter jasmine), this protein is DNA-directed RNA polymerase subunit beta'.